We begin with the raw amino-acid sequence, 118 residues long: Large ribosomal subunit protein uL24 (118 aa).

This sequence belongs to the universal ribosomal protein uL24 family. As to quaternary structure, part of the 50S ribosomal subunit.

In terms of biological role, one of two assembly initiator proteins, it binds directly to the 5'-end of the 23S rRNA, where it nucleates assembly of the 50S subunit. One of the proteins that surrounds the polypeptide exit tunnel on the outside of the subunit. This Prochlorococcus marinus (strain MIT 9515) protein is Large ribosomal subunit protein uL24.